The primary structure comprises 97 residues: Putative pterin-4-alpha-carbinolamine dehydratase (97 aa).

Belongs to the pterin-4-alpha-carbinolamine dehydratase family.

It catalyses the reaction (4aS,6R)-4a-hydroxy-L-erythro-5,6,7,8-tetrahydrobiopterin = (6R)-L-erythro-6,7-dihydrobiopterin + H2O. This chain is Putative pterin-4-alpha-carbinolamine dehydratase, found in Opitutus terrae (strain DSM 11246 / JCM 15787 / PB90-1).